Consider the following 480-residue polypeptide: Wax ester synthase/diacylglycerol acyltransferase 7 (480 aa).

Topologically, residues 1–193 (MTYGEEEPVS…LRSIFTIGST (193 aa)) are cytoplasmic. His-135 functions as the Proton acceptor in the catalytic mechanism. The helical transmembrane segment at 194–214 (MRLLWNTTIDMLLLLATVLFL) threads the bilayer. Residues 215 to 329 (KDTKTPLKAG…VKDSKCRWGN (115 aa)) lie on the Lumenal side of the membrane. Residue Asn-252 is glycosylated (N-linked (GlcNAc...) asparagine). A helical transmembrane segment spans residues 330–350 (YFSFIFLPFTIGLQTDPLVYL). Topologically, residues 351 to 365 (KMSKSMMARKKHSYH) are cytoplasmic. A helical transmembrane segment spans residues 366 to 386 (AALVYFIIKIVLKVFGAKAAA). The Lumenal segment spans residues 387-480 (ELFDRPVRNT…KASLCERGLL (94 aa)). Residue Asn-395 is glycosylated (N-linked (GlcNAc...) asparagine).

It in the N-terminal section; belongs to the long-chain O-acyltransferase family. Expressed in roots, stems, leaves, flowers and siliques.

It localises to the cell membrane. Its subcellular location is the endoplasmic reticulum membrane. It is found in the golgi apparatus membrane. The enzyme catalyses an acyl-CoA + a 1,2-diacyl-sn-glycerol = a triacyl-sn-glycerol + CoA. It catalyses the reaction a long chain fatty alcohol + a fatty acyl-CoA = a wax ester + CoA. It participates in glycerolipid metabolism; triacylglycerol biosynthesis. Its pathway is lipid metabolism. Functionally, bifunctional wax ester synthase/diacylglycerol acyltransferase that uses acyl-CoAs with 14, 16 and 18 carbons as substrates, preferably in combination with 16:0ol alcohol. Involved in cuticular wax biosynthesis. The chain is Wax ester synthase/diacylglycerol acyltransferase 7 from Arabidopsis thaliana (Mouse-ear cress).